The sequence spans 254 residues: Alcohol dehydrogenase (254 aa).

Residue 10 to 33 (FVAGLGGIGLDTSRELVKRDLKNL) participates in NAD(+) binding. S138 is a binding site for substrate. Residue Y151 is the Proton acceptor of the active site.

Belongs to the short-chain dehydrogenases/reductases (SDR) family. Homodimer.

The catalysed reaction is a primary alcohol + NAD(+) = an aldehyde + NADH + H(+). The enzyme catalyses a secondary alcohol + NAD(+) = a ketone + NADH + H(+). The chain is Alcohol dehydrogenase (Adh) from Drosophila madeirensis (Fruit fly).